A 1044-amino-acid chain; its full sequence is MVLSLTGLIAFSFLQATLALNPEDPNVCSHWESYAVTVQESYAHPFDQIYYTRCTDILNWFKCTRHRISYKTAYRRGLRTMYRRRSQCCPGYYESGDFCIPLCTEECVHGRCVSPDTCHCEPGWGGPDCSSGCDSDHWGPHCSNRCQCQNGALCNPITGACVCAAGFRGWRCEELCAPGTHGKGCQLPCQCRHGASCDPRAGECLCAPGYTGVYCEELCPPGSHGAHCELRCPCQNGGTCHHITGECACPPGWTGAVCAQPCPPGTFGQNCSQDCPCHHGGQCDHVTGQCHCTAGYMGDRCQEECPFGSFGFQCSQHCDCHNGGQCSPTTGACECEPGYKGPRCQERLCPEGLHGPGCTLPCPCDADNTISCHPVTGACTCQPGWSGHHCNESCPVGYYGDGCQLPCTCQNGADCHSITGGCTCAPGFMGEVCAVSCAAGTYGPNCSSICSCNNGGTCSPVDGSCTCKEGWQGLDCTLPCPSGTWGLNCNESCTCANGAACSPIDGSCSCTPGWLGDTCELPCPDGTFGLNCSEHCDCSHADGCDPVTGHCCCLAGWTGIRCDSTCPPGRWGPNCSVSCSCENGGSCSPEDGSCECAPGFRGPLCQRICPPGFYGHGCAQPCPLCVHSSRPCHHISGICECLPGFSGALCNQVCAGGYFGQDCAQLCSCANNGTCSPIDGSCQCFPGWIGKDCSQACPPGFWGPACFHACSCHNGASCSAEDGACHCTPGWTGLFCTQRCPAAFFGKDCGRVCQCQNGASCDHISGKCTCRTGFTGQHCEQRCAPGTFGYGCQQLCECMNNSTCDHVTGTCYCSPGFKGIRCDQAALMMEELNPYTKISPALGAERHSVGAVTGIMLLLFLIVVLLGLFAWHRRRQKEKGRDLAPRVSYTPAMRMTSTDYSLSGACGMDRRQNTYIMDKGFKDYMKESVCSSSTCSLNSSENPYATIKDPPILTCKLPESSYVEMKSPVHMGSPYTDVPSLSTSNKNIYEVEPTVSVVQEGCGHNSSYIQNAYDLPRNSHIPGHYDLLPVRQSPANGPSQDKQS.

Residues 1 to 19 (MVLSLTGLIAFSFLQATLA) form the signal peptide. Over 20 to 848 (LNPEDPNVCS…SPALGAERHS (829 aa)) the chain is Extracellular. The EMI domain occupies 24 to 101 (DPNVCSHWES…YYESGDFCIP (78 aa)). 14 cysteine pairs are disulfide-bonded: cysteine 28–cysteine 89, cysteine 54–cysteine 63, cysteine 88–cysteine 99, cysteine 103–cysteine 118, cysteine 120–cysteine 129, cysteine 146–cysteine 154, cysteine 148–cysteine 161, cysteine 163–cysteine 172, cysteine 185–cysteine 197, cysteine 191–cysteine 204, cysteine 206–cysteine 215, cysteine 228–cysteine 240, cysteine 234–cysteine 247, and cysteine 249–cysteine 258. 9 EGF-like domains span residues 95–130 (SGDFCIPLCTEECVHGRCVSPDTCHCEPGWGGPDCS), 143–173 (SNRCQCQNGALCNPITGACVCAAGFRGWRCE), 181–216 (HGKGCQLPCQCRHGASCDPRAGECLCAPGYTGVYCE), 224–259 (HGAHCELRCPCQNGGTCHHITGECACPPGWTGAVCA), 267–302 (FGQNCSQDCPCHHGGQCDHVTGQCHCTAGYMGDRCQ), 310–345 (FGFQCSQHCDCHNGGQCSPTTGACECEPGYKGPRCQ), 399–434 (YGDGCQLPCTCQNGADCHSITGGCTCAPGFMGEVCA), 442–477 (YGPNCSSICSCNNGGTCSPVDGSCTCKEGWQGLDCT), and 490–520 (NESCTCANGAACSPIDGSCSCTPGWLGDTCE). The N-linked (GlcNAc...) asparagine glycan is linked to asparagine 270. Disulfide bonds link cysteine 271–cysteine 283, cysteine 277–cysteine 290, cysteine 292–cysteine 301, cysteine 314–cysteine 326, cysteine 320–cysteine 333, cysteine 335–cysteine 344, cysteine 403–cysteine 415, cysteine 409–cysteine 422, cysteine 424–cysteine 433, cysteine 446–cysteine 458, cysteine 452–cysteine 465, cysteine 467–cysteine 476, cysteine 493–cysteine 501, cysteine 495–cysteine 508, and cysteine 510–cysteine 519. An N-linked (GlcNAc...) asparagine glycan is attached at asparagine 531. EGF-like domains lie at 571 to 606 (WGPNCSVSCSCENGGSCSPEDGSCECAPGFRGPLCQ), 659 to 694 (FGQDCAQLCSCANNGTCSPIDGSCQCFPGWIGKDCS), 707 to 737 (FHACSCHNGASCSAEDGACHCTPGWTGLFCT), 750 to 780 (GRVCQCQNGASCDHISGKCTCRTGFTGQHCE), and 788 to 823 (FGYGCQQLCECMNNSTCDHVTGTCYCSPGFKGIRCD). Cystine bridges form between cysteine 575–cysteine 587, cysteine 581–cysteine 594, cysteine 596–cysteine 605, cysteine 663–cysteine 675, cysteine 669–cysteine 682, cysteine 684–cysteine 693, cysteine 710–cysteine 718, cysteine 712–cysteine 725, cysteine 727–cysteine 736, cysteine 753–cysteine 761, cysteine 755–cysteine 768, cysteine 770–cysteine 779, cysteine 792–cysteine 804, cysteine 798–cysteine 811, and cysteine 813–cysteine 822. The chain crosses the membrane as a helical span at residues 849-869 (VGAVTGIMLLLFLIVVLLGLF). The Cytoplasmic segment spans residues 870–1044 (AWHRRRQKEK…ANGPSQDKQS (175 aa)). The tract at residues 1023–1044 (GHYDLLPVRQSPANGPSQDKQS) is disordered. The span at 1033-1044 (SPANGPSQDKQS) shows a compositional bias: polar residues.

This sequence belongs to the MEGF family. Homomer. Does not interact with MEGF10.

It localises to the cell membrane. Its subcellular location is the basolateral cell membrane. In terms of biological role, may regulate the mosaic spacing of specific neuron subtypes in the retina through homotypic retinal neuron repulsion. Mosaics provide a mechanism to distribute each cell type evenly across the retina, ensuring that all parts of the visual field have access to a full set of processing elements. This Homo sapiens (Human) protein is Multiple epidermal growth factor-like domains protein 11 (MEGF11).